Here is a 428-residue protein sequence, read N- to C-terminus: GTPase Obg (428 aa).

An Obg domain is found at 1-158; it reads MFVDQVKIYV…RDVILELKVL (158 aa). Positions 159–329 constitute an OBG-type G domain; the sequence is ADVGLVGFPS…LLFEVANLIE (171 aa). Residues 165 to 172, 190 to 194, 212 to 215, 282 to 285, and 310 to 312 each bind GTP; these read GFPSVGKS, FTTIV, DLPG, NKMD, and SAV. 2 residues coordinate Mg(2+): serine 172 and threonine 192. One can recognise an OCT domain in the interval 350–428; it reads KFDTEGVKFE…ILEYEFEFID (79 aa).

The protein belongs to the TRAFAC class OBG-HflX-like GTPase superfamily. OBG GTPase family. As to quaternary structure, monomer. Requires Mg(2+) as cofactor.

The protein resides in the cytoplasm. An essential GTPase which binds GTP, GDP and possibly (p)ppGpp with moderate affinity, with high nucleotide exchange rates and a fairly low GTP hydrolysis rate. Plays a role in control of the cell cycle, stress response, ribosome biogenesis and in those bacteria that undergo differentiation, in morphogenesis control. The polypeptide is GTPase Obg (Bacillus cereus (strain ATCC 14579 / DSM 31 / CCUG 7414 / JCM 2152 / NBRC 15305 / NCIMB 9373 / NCTC 2599 / NRRL B-3711)).